Here is a 158-residue protein sequence, read N- to C-terminus: NAD(P)H-quinone oxidoreductase subunit J, chloroplastic (158 aa).

This sequence belongs to the complex I 30 kDa subunit family. In terms of assembly, NDH is composed of at least 16 different subunits, 5 of which are encoded in the nucleus.

Its subcellular location is the plastid. The protein resides in the chloroplast thylakoid membrane. The catalysed reaction is a plastoquinone + NADH + (n+1) H(+)(in) = a plastoquinol + NAD(+) + n H(+)(out). The enzyme catalyses a plastoquinone + NADPH + (n+1) H(+)(in) = a plastoquinol + NADP(+) + n H(+)(out). In terms of biological role, NDH shuttles electrons from NAD(P)H:plastoquinone, via FMN and iron-sulfur (Fe-S) centers, to quinones in the photosynthetic chain and possibly in a chloroplast respiratory chain. The immediate electron acceptor for the enzyme in this species is believed to be plastoquinone. Couples the redox reaction to proton translocation, and thus conserves the redox energy in a proton gradient. The polypeptide is NAD(P)H-quinone oxidoreductase subunit J, chloroplastic (Citrus sinensis (Sweet orange)).